We begin with the raw amino-acid sequence, 293 residues long: Lipoyl synthase (293 aa).

Residues Cys-38, Cys-43, Cys-49, Cys-64, Cys-68, Cys-71, and Ser-277 each coordinate [4Fe-4S] cluster. In terms of domain architecture, Radical SAM core spans Trp-50–Arg-266.

The protein belongs to the radical SAM superfamily. Lipoyl synthase family. It depends on [4Fe-4S] cluster as a cofactor.

The protein localises to the cytoplasm. It catalyses the reaction [[Fe-S] cluster scaffold protein carrying a second [4Fe-4S](2+) cluster] + N(6)-octanoyl-L-lysyl-[protein] + 2 oxidized [2Fe-2S]-[ferredoxin] + 2 S-adenosyl-L-methionine + 4 H(+) = [[Fe-S] cluster scaffold protein] + N(6)-[(R)-dihydrolipoyl]-L-lysyl-[protein] + 4 Fe(3+) + 2 hydrogen sulfide + 2 5'-deoxyadenosine + 2 L-methionine + 2 reduced [2Fe-2S]-[ferredoxin]. The protein operates within protein modification; protein lipoylation via endogenous pathway; protein N(6)-(lipoyl)lysine from octanoyl-[acyl-carrier-protein]: step 2/2. Catalyzes the radical-mediated insertion of two sulfur atoms into the C-6 and C-8 positions of the octanoyl moiety bound to the lipoyl domains of lipoate-dependent enzymes, thereby converting the octanoylated domains into lipoylated derivatives. The protein is Lipoyl synthase of Chlorobium chlorochromatii (strain CaD3).